Reading from the N-terminus, the 440-residue chain is GTPase Der (440 aa).

EngA-type G domains are found at residues 4-169 and 178-353; these read PVVA…PEED and IKVA…DQAA. GTP contacts are provided by residues 10–17, 57–61, 120–123, 184–191, 231–235, and 296–299; these read GRPNVGKS, DTGGI, NKVD, GKPNVGKS, DTAGI, and NKWD. The region spanning 354-438 is the KH-like domain; it reads MRISTGVLND…PIKFILREKE (85 aa).

The protein belongs to the TRAFAC class TrmE-Era-EngA-EngB-Septin-like GTPase superfamily. EngA (Der) GTPase family. As to quaternary structure, associates with the 50S ribosomal subunit.

In terms of biological role, GTPase that plays an essential role in the late steps of ribosome biogenesis. This is GTPase Der from Acetivibrio thermocellus (strain ATCC 27405 / DSM 1237 / JCM 9322 / NBRC 103400 / NCIMB 10682 / NRRL B-4536 / VPI 7372) (Clostridium thermocellum).